The primary structure comprises 173 residues: Co-chaperone protein HscB (173 aa).

One can recognise a J domain in the interval 2-74 (DYFTLFGLPA…LKRAEYMLSQ (73 aa)).

This sequence belongs to the HscB family. In terms of assembly, interacts with HscA and stimulates its ATPase activity. Interacts with IscU.

Its function is as follows. Co-chaperone involved in the maturation of iron-sulfur cluster-containing proteins. Seems to help targeting proteins to be folded toward HscA. The protein is Co-chaperone protein HscB of Xenorhabdus nematophila (strain ATCC 19061 / DSM 3370 / CCUG 14189 / LMG 1036 / NCIMB 9965 / AN6).